A 427-amino-acid chain; its full sequence is Glutamate-1-semialdehyde 2,1-aminomutase (427 aa).

Position 265 is an N6-(pyridoxal phosphate)lysine (K265).

It belongs to the class-III pyridoxal-phosphate-dependent aminotransferase family. HemL subfamily. As to quaternary structure, homodimer. The cofactor is pyridoxal 5'-phosphate.

It is found in the cytoplasm. The catalysed reaction is (S)-4-amino-5-oxopentanoate = 5-aminolevulinate. Its pathway is porphyrin-containing compound metabolism; protoporphyrin-IX biosynthesis; 5-aminolevulinate from L-glutamyl-tRNA(Glu): step 2/2. This Photorhabdus laumondii subsp. laumondii (strain DSM 15139 / CIP 105565 / TT01) (Photorhabdus luminescens subsp. laumondii) protein is Glutamate-1-semialdehyde 2,1-aminomutase.